The following is a 268-amino-acid chain: Imidazole glycerol phosphate synthase subunit HisF (268 aa).

Active-site residues include D12 and D131.

This sequence belongs to the HisA/HisF family. Heterodimer of HisH and HisF.

The protein localises to the cytoplasm. It catalyses the reaction 5-[(5-phospho-1-deoxy-D-ribulos-1-ylimino)methylamino]-1-(5-phospho-beta-D-ribosyl)imidazole-4-carboxamide + L-glutamine = D-erythro-1-(imidazol-4-yl)glycerol 3-phosphate + 5-amino-1-(5-phospho-beta-D-ribosyl)imidazole-4-carboxamide + L-glutamate + H(+). It functions in the pathway amino-acid biosynthesis; L-histidine biosynthesis; L-histidine from 5-phospho-alpha-D-ribose 1-diphosphate: step 5/9. IGPS catalyzes the conversion of PRFAR and glutamine to IGP, AICAR and glutamate. The HisF subunit catalyzes the cyclization activity that produces IGP and AICAR from PRFAR using the ammonia provided by the HisH subunit. This is Imidazole glycerol phosphate synthase subunit HisF from Chelativorans sp. (strain BNC1).